A 229-amino-acid polypeptide reads, in one-letter code: Protein GLC8 (229 aa).

Disordered regions lie at residues 1 to 21 (MGGILKNPLALSPEQLAQQDP), 35 to 62 (TQKNAKLTSHKRNIPGLDNTKEEGEIIG), and 107 to 229 (QFQD…TKEP). Residue Ser12 is modified to Phosphoserine. The span at 107–117 (QFQDIHIDEPK) shows a compositional bias: basic and acidic residues. Residue Thr118 is modified to Phosphothreonine; by PHO85. Residue Ser158 is modified to Phosphoserine. Positions 164–173 (FEIKENKQPD) are enriched in basic and acidic residues. Acidic residues predominate over residues 175-184 (ETNDENDEDS). Ser184 is subject to Phosphoserine. Residues 185 to 196 (PEARHKKFEEMR) are compositionally biased toward basic and acidic residues.

Post-translationally, phosphorylated by the cyclin-CDKs PCL6-PHO85 and PCL7-PHO85. Phosphorylation of Thr-118 inactivates GLC8.

Modulator of GLC7 type-1 protein phosphatase. The polypeptide is Protein GLC8 (GLC8) (Saccharomyces cerevisiae (strain ATCC 204508 / S288c) (Baker's yeast)).